The primary structure comprises 226 residues: Cytidylate kinase (226 aa).

An ATP-binding site is contributed by 14 to 22 (GPAGAGKST).

Belongs to the cytidylate kinase family. Type 1 subfamily.

It localises to the cytoplasm. It carries out the reaction CMP + ATP = CDP + ADP. The enzyme catalyses dCMP + ATP = dCDP + ADP. The sequence is that of Cytidylate kinase from Symbiobacterium thermophilum (strain DSM 24528 / JCM 14929 / IAM 14863 / T).